A 207-amino-acid chain; its full sequence is Large ribosomal subunit protein uL4 (207 aa).

Residues 47 to 77 (GTADTKTRAEVSGGGRKPWRQKGTGRARHGS) form a disordered region. A compositionally biased stretch (basic residues) spans 63–77 (KPWRQKGTGRARHGS).

It belongs to the universal ribosomal protein uL4 family. Part of the 50S ribosomal subunit.

One of the primary rRNA binding proteins, this protein initially binds near the 5'-end of the 23S rRNA. It is important during the early stages of 50S assembly. It makes multiple contacts with different domains of the 23S rRNA in the assembled 50S subunit and ribosome. Its function is as follows. Forms part of the polypeptide exit tunnel. This is Large ribosomal subunit protein uL4 from Symbiobacterium thermophilum (strain DSM 24528 / JCM 14929 / IAM 14863 / T).